The primary structure comprises 1229 residues: ABC transporter B family member 22 (1229 aa).

6 helical membrane-spanning segments follow: residues 22–42, 69–89, 145–167, 171–193, 251–271, and 274–294; these read MGLG…IFFI, VALL…GYCW, LPNF…IMLW, IVGF…ALIN, GIAI…TWYG, and MVMY…CITY. One can recognise an ABC transmembrane type-1 1 domain in the interval 22 to 311; the sequence is MGLGLIGAVG…GLSNLKYFSE (290 aa). In terms of domain architecture, ABC transporter 1 spans 346-582; it reads VQFKHVKFMY…VDGQYTSLVR (237 aa). ATP is bound at residue 381–388; the sequence is GGSGSGKS. N-linked (GlcNAc...) asparagine glycosylation is found at Asn529 and Asn594. 2 helical membrane passes run 661–681 and 703–723; these read ALYG…YAYA and IYVL…IIQQ. An ABC transmembrane type-1 2 domain is found at 661–949; the sequence is ALYGCLSAVL…AGAMTMDLAK (289 aa). The N-linked (GlcNAc...) asparagine glycan is linked to Asn758. Transmembrane regions (helical) follow at residues 782 to 800, 807 to 823, 885 to 908, and 923 to 943; these read VSLL…TLGL, SIVM…CFYT, WLAG…NYWY, and FFEL…AGAM. Positions 984–1222 constitute an ABC transporter 2 domain; that stretch reads IKFVNVDFAY…GPTGVYFSLV (239 aa). N-linked (GlcNAc...) asparagine glycosylation is present at Asn1004. 1019 to 1026 is a binding site for ATP; sequence GPSGSGKS. Asn1157 carries N-linked (GlcNAc...) asparagine glycosylation.

The protein belongs to the ABC transporter superfamily. ABCB family. Multidrug resistance exporter (TC 3.A.1.201) subfamily.

It localises to the membrane. This chain is ABC transporter B family member 22 (ABCB22), found in Arabidopsis thaliana (Mouse-ear cress).